Reading from the N-terminus, the 307-residue chain is Plastid division protein PDV2 (307 aa).

Position 1 is an N-acetylmethionine (Met-1). The Cytoplasmic portion of the chain corresponds to Met-1–Arg-213. Residues Ser-28–Glu-66 are disordered. Residues Glu-46–Asp-61 are compositionally biased toward basic and acidic residues. At Ser-50 the chain carries Phosphoserine. Positions Leu-76–Glu-103 form a coiled coil. The segment at His-174–Gly-206 is disordered. The helical transmembrane segment at Phe-214–Ala-234 threads the bilayer. The Chloroplast intermembrane segment spans residues Ser-235 to Gly-307. Residues Ser-235–Gly-307 form an ARC6 binding region.

Interacts (via C-terminus) with ARC6 (via C-terminus) in the chloroplast intermembrane space; this interaction induces ARC6 homodimerization and leads to the formation of a heterotetramer containing two ARC6 and two PDV2 subunits. Interacts with ARC5/DRP5B. Mostly expressed in young leaves.

Its subcellular location is the plastid. The protein resides in the chloroplast outer membrane. Component of the plastid division machinery consisting in a binary fission accomplished by the simultaneous constriction of the FtsZ ring on the stromal side of the inner envelope membrane, and the ARC5/DRP5B ring on the cytosolic side of the outer envelope membrane. Positive factor of chloroplast division required, with a dosage effect, to mediate the recruitment and dimerization of ARC5/DRP5B at the midplastid constriction site in the cytoplasm at plastid outer envelope membranes (OEMs). Prevents ARC5/DRP5B GTPase acrivity. Relays plastid division site position between stroma and outer surface via interactions with the cytoplasmic ARC5/DRP5B and the inner membrane ARC6 that recruits stromal FtsZ ring. Binding to phosphatidylinositol 4-phosphate (PI4P) modulates negatively chloroplast division. The chain is Plastid division protein PDV2 from Arabidopsis thaliana (Mouse-ear cress).